A 611-amino-acid polypeptide reads, in one-letter code: Procollagen galactosyltransferase 1-B (611 aa).

The N-terminal stretch at 1 to 24 (MSQAGVERLLKGLQILVLVLRLSA) is a signal peptide. 5 N-linked (GlcNAc...) asparagine glycosylation sites follow: Asn-85, Asn-173, Asn-370, Asn-373, and Asn-568. A compositionally biased stretch (basic and acidic residues) spans 576-591 (DRAKSRKTHQQEKLRS). The tract at residues 576–611 (DRAKSRKTHQQEKLRSEALNTPSMGSPFDNTARDEL) is disordered. The Prevents secretion from ER signature appears at 608 to 611 (RDEL).

Belongs to the glycosyltransferase 25 family.

Its subcellular location is the endoplasmic reticulum lumen. It carries out the reaction (5R)-5-hydroxy-L-lysyl-[collagen] + UDP-alpha-D-galactose = (5R)-5-O-(beta-D-galactosyl)-5-hydroxy-L-lysyl-[collagen] + UDP + H(+). Its function is as follows. Beta-galactosyltransferase that transfers beta-galactose to hydroxylysine residues of type I collagen. By acting on collagen glycosylation, facilitates the formation of collagen triple helix. This chain is Procollagen galactosyltransferase 1-B (colgalt1-b), found in Xenopus laevis (African clawed frog).